A 364-amino-acid polypeptide reads, in one-letter code: N-acetyl-gamma-glutamyl-phosphate reductase (364 aa).

Cysteine 157 is a catalytic residue.

Belongs to the NAGSA dehydrogenase family. Type 1 subfamily.

It localises to the cytoplasm. It carries out the reaction N-acetyl-L-glutamate 5-semialdehyde + phosphate + NADP(+) = N-acetyl-L-glutamyl 5-phosphate + NADPH + H(+). It participates in amino-acid biosynthesis; L-arginine biosynthesis; N(2)-acetyl-L-ornithine from L-glutamate: step 3/4. In terms of biological role, catalyzes the NADPH-dependent reduction of N-acetyl-5-glutamyl phosphate to yield N-acetyl-L-glutamate 5-semialdehyde. In Bifidobacterium animalis subsp. lactis (strain AD011), this protein is N-acetyl-gamma-glutamyl-phosphate reductase.